The following is a 318-amino-acid chain: Chlorophyllase-2 (318 aa).

Positions 136 to 140 (GHSRG) match the GXSXG motif. The active-site Nucleophile is the serine 138. Residues aspartate 167 and histidine 244 each act as charge relay system in the active site.

The protein belongs to the AB hydrolase superfamily. Lipase family. Expressed in leaves, flowers and flower buds, but not in roots.

The protein resides in the cytoplasm. The protein localises to the cytosol. It carries out the reaction a chlorophyll + H2O = a chlorophyllide + phytol + H(+). The enzyme catalyses chlorophyll a + H2O = phytol + chlorophyllide a + H(+). It functions in the pathway porphyrin-containing compound metabolism; chlorophyll degradation. In terms of biological role, catalyzes the hydrolysis of ester bond in chlorophyll to yield chlorophyllide and phytol. Does not seem to be required for chlorophyll degradation during senescence. The polypeptide is Chlorophyllase-2 (Arabidopsis thaliana (Mouse-ear cress)).